We begin with the raw amino-acid sequence, 291 residues long: Lipoyl synthase (291 aa).

[4Fe-4S] cluster is bound by residues cysteine 36, cysteine 41, cysteine 47, cysteine 62, cysteine 66, cysteine 69, and serine 275. The Radical SAM core domain occupies 48–264 (FSKKTATFLI…KEFAISIGFK (217 aa)).

It belongs to the radical SAM superfamily. Lipoyl synthase family. Requires [4Fe-4S] cluster as cofactor.

The protein resides in the cytoplasm. It carries out the reaction [[Fe-S] cluster scaffold protein carrying a second [4Fe-4S](2+) cluster] + N(6)-octanoyl-L-lysyl-[protein] + 2 oxidized [2Fe-2S]-[ferredoxin] + 2 S-adenosyl-L-methionine + 4 H(+) = [[Fe-S] cluster scaffold protein] + N(6)-[(R)-dihydrolipoyl]-L-lysyl-[protein] + 4 Fe(3+) + 2 hydrogen sulfide + 2 5'-deoxyadenosine + 2 L-methionine + 2 reduced [2Fe-2S]-[ferredoxin]. It participates in protein modification; protein lipoylation via endogenous pathway; protein N(6)-(lipoyl)lysine from octanoyl-[acyl-carrier-protein]: step 2/2. Functionally, catalyzes the radical-mediated insertion of two sulfur atoms into the C-6 and C-8 positions of the octanoyl moiety bound to the lipoyl domains of lipoate-dependent enzymes, thereby converting the octanoylated domains into lipoylated derivatives. The chain is Lipoyl synthase from Caldicellulosiruptor bescii (strain ATCC BAA-1888 / DSM 6725 / KCTC 15123 / Z-1320) (Anaerocellum thermophilum).